The following is a 460-amino-acid chain: G2/mitotic-specific cyclin-4 (460 aa).

The protein belongs to the cyclin family. Cyclin AB subfamily.

Essential for the control of the cell cycle at the G2/M (mitosis) transition. Interacts with the CDC2 protein kinase to form MPF. G2/M cyclins accumulate steadily during G2 and are abruptly destroyed at mitosis. The polypeptide is G2/mitotic-specific cyclin-4 (CLB4) (Saccharomyces cerevisiae (strain ATCC 204508 / S288c) (Baker's yeast)).